Consider the following 363-residue polypeptide: Glutamate 5-kinase (363 aa).

Lys6 is a binding site for ATP. 3 residues coordinate substrate: Ser46, Asp133, and Asn145. Residues 165-166 (TD) and 207-213 (TGGMHTK) contribute to the ATP site. The PUA domain occupies 271 to 349 (TGRLLLDEGA…RDIEAVLGFT (79 aa)).

Belongs to the glutamate 5-kinase family.

Its subcellular location is the cytoplasm. The enzyme catalyses L-glutamate + ATP = L-glutamyl 5-phosphate + ADP. It functions in the pathway amino-acid biosynthesis; L-proline biosynthesis; L-glutamate 5-semialdehyde from L-glutamate: step 1/2. Catalyzes the transfer of a phosphate group to glutamate to form L-glutamate 5-phosphate. This chain is Glutamate 5-kinase, found in Deinococcus geothermalis (strain DSM 11300 / CIP 105573 / AG-3a).